We begin with the raw amino-acid sequence, 466 residues long: 3-isopropylmalate dehydratase large subunit (466 aa).

Residues Cys346, Cys406, and Cys409 each coordinate [4Fe-4S] cluster.

Belongs to the aconitase/IPM isomerase family. LeuC type 1 subfamily. In terms of assembly, heterodimer of LeuC and LeuD. Requires [4Fe-4S] cluster as cofactor.

The catalysed reaction is (2R,3S)-3-isopropylmalate = (2S)-2-isopropylmalate. The protein operates within amino-acid biosynthesis; L-leucine biosynthesis; L-leucine from 3-methyl-2-oxobutanoate: step 2/4. In terms of biological role, catalyzes the isomerization between 2-isopropylmalate and 3-isopropylmalate, via the formation of 2-isopropylmaleate. This chain is 3-isopropylmalate dehydratase large subunit, found in Cytophaga hutchinsonii (strain ATCC 33406 / DSM 1761 / CIP 103989 / NBRC 15051 / NCIMB 9469 / D465).